A 304-amino-acid polypeptide reads, in one-letter code: Pyridoxal 5'-phosphate synthase subunit PdxS (304 aa).

Asp34 contributes to the D-ribose 5-phosphate binding site. The active-site Schiff-base intermediate with D-ribose 5-phosphate is Lys91. Gly163 is a binding site for D-ribose 5-phosphate. Residue Arg175 participates in D-glyceraldehyde 3-phosphate binding. Residues Gly224 and 245–246 (GS) contribute to the D-ribose 5-phosphate site.

Belongs to the PdxS/SNZ family. In terms of assembly, in the presence of PdxT, forms a dodecamer of heterodimers.

The catalysed reaction is aldehydo-D-ribose 5-phosphate + D-glyceraldehyde 3-phosphate + L-glutamine = pyridoxal 5'-phosphate + L-glutamate + phosphate + 3 H2O + H(+). It functions in the pathway cofactor biosynthesis; pyridoxal 5'-phosphate biosynthesis. In terms of biological role, catalyzes the formation of pyridoxal 5'-phosphate from ribose 5-phosphate (RBP), glyceraldehyde 3-phosphate (G3P) and ammonia. The ammonia is provided by the PdxT subunit. Can also use ribulose 5-phosphate and dihydroxyacetone phosphate as substrates, resulting from enzyme-catalyzed isomerization of RBP and G3P, respectively. This is Pyridoxal 5'-phosphate synthase subunit PdxS from Streptomyces avermitilis (strain ATCC 31267 / DSM 46492 / JCM 5070 / NBRC 14893 / NCIMB 12804 / NRRL 8165 / MA-4680).